Consider the following 59-residue polypeptide: Large ribosomal subunit protein uL30 (59 aa).

This sequence belongs to the universal ribosomal protein uL30 family. As to quaternary structure, part of the 50S ribosomal subunit.

In Sulfurihydrogenibium sp. (strain YO3AOP1), this protein is Large ribosomal subunit protein uL30.